The sequence spans 118 residues: Cell division protein FtsB (118 aa).

The Cytoplasmic segment spans residues methionine 1–leucine 3. A helical membrane pass occupies residues leucine 4–leucine 21. At glycine 22–arginine 118 the chain is on the periplasmic side. Positions lysine 28–threonine 62 form a coiled coil. The tract at residues leucine 88–arginine 118 is disordered. The segment covering proline 95–alanine 105 has biased composition (polar residues). Over residues proline 109 to arginine 118 the composition is skewed to pro residues.

Belongs to the FtsB family. Part of a complex composed of FtsB, FtsL and FtsQ.

It localises to the cell inner membrane. Essential cell division protein. May link together the upstream cell division proteins, which are predominantly cytoplasmic, with the downstream cell division proteins, which are predominantly periplasmic. The chain is Cell division protein FtsB from Bordetella parapertussis (strain 12822 / ATCC BAA-587 / NCTC 13253).